We begin with the raw amino-acid sequence, 494 residues long: Alpha-amylase-related protein (494 aa).

Positions 1–20 are cleaved as a signal peptide; it reads MIKFALALTLCLAGASLSLA. Q21 is modified (pyrrolidone carboxylic acid). C48 and C104 are oxidised to a cystine. N118, Q169, and D178 together coordinate Ca(2+). The cysteines at positions 157 and 171 are disulfide-linked. R206 serves as a coordination point for chloride. Residue D208 is the Nucleophile of the active site. H212 is a binding site for Ca(2+). E245 (proton donor) is an active-site residue. 2 residues coordinate chloride: N308 and R343. Intrachain disulfides connect C376/C382, C418/C441, and C448/C460.

This sequence belongs to the glycosyl hydrolase 13 family. In terms of assembly, monomer. The cofactor is Ca(2+). Requires chloride as cofactor.

It is found in the secreted. It catalyses the reaction Endohydrolysis of (1-&gt;4)-alpha-D-glucosidic linkages in polysaccharides containing three or more (1-&gt;4)-alpha-linked D-glucose units.. This chain is Alpha-amylase-related protein (Amyrel), found in Drosophila bakoue (Fruit fly).